A 397-amino-acid polypeptide reads, in one-letter code: MPQLSGGGGGGDPELCATDEMIPFKDEGDPQKEKIFAEISHPEEEGDLADIKSSLVNESEIIPASNGHEVVRQAPSSQEPYHDKAREHPDEGKHPDGGLYNKGPSYSSYSGYIMMPNMNSDPYMSNGSLSPPIPRTSNKVPVVQPSHAVHPLTPLITYSDEHFSPGSHPSHIPSDVNSKQGMSRHPPAPEIPTFYPLSPGGVGQITPPIGWQGQPVYPITGGFRQPYPSSLSGDTSMSRFSHHMIPGPPGPHTTGIPHPAIVTPQVKQEHPHTDSDLMHVKPQHEQRKEQEPKRPHIKKPLNAFMLYMKEMRANVVAECTLKESAAINQILGRRWHALSREEQAKYYELARKERQLHMQLYPGWSARDNYGKKKKRKREKLQESTSGTGPRMTAAYI.

Residues 1–60 (MPQLSGGGGGGDPELCATDEMIPFKDEGDPQKEKIFAEISHPEEEGDLADIKSSLVNESE) are CTNNB1-binding. Lys25 participates in a covalent cross-link: Glycyl lysine isopeptide (Lys-Gly) (interchain with G-Cter in SUMO). Residues 59-102 (SEIIPASNGHEVVRQAPSSQEPYHDKAREHPDEGKHPDGGLYNK) form a disordered region. Residues 80–96 (PYHDKAREHPDEGKHPD) show a composition bias toward basic and acidic residues. The residue at position 130 (Ser130) is a Phosphoserine. Thr153 carries the post-translational modification Phosphothreonine; by NLK. Phosphoserine; by NLK is present on Ser164. 2 disordered regions span residues 164-191 (SPGS…APEI) and 266-296 (VKQE…KRPH). Residue Lys267 forms a Glycyl lysine isopeptide (Lys-Gly) (interchain with G-Cter in SUMO) linkage. Over residues 267–294 (KQEHPHTDSDLMHVKPQHEQRKEQEPKR) the composition is skewed to basic and acidic residues. The segment at residues 297–365 (IKKPLNAFML…LHMQLYPGWS (69 aa)) is a DNA-binding region (HMG box). Residues 367 to 397 (RDNYGKKKKRKREKLQESTSGTGPRMTAAYI) are disordered.

This sequence belongs to the TCF/LEF family. In terms of assembly, binds the armadillo repeat of CTNNB1 and forms a stable complex. Binds TLE1, ALYREF/THOC4, MDFI and MDFIC. Interacts with NLK. Interacts with EP300 and PIASG. Interacts with DAZAP2. Phosphorylated at Thr-153 and/or Ser-164 by NLK. Phosphorylation by NLK at these sites represses LEF1-mediated transcriptional activation of target genes of the canonical Wnt signaling pathway. In terms of tissue distribution, expressed in Vgamma1.1 and Vgamma2 gamma-delta T-cells, however not expressed in gamma-delta thymocytes fated for Il17a expression (at protein level). Expressed in alpha-beta T-cell lineages. Expressed in the thymus. Found in distinct epithelial cell compartments of the skin and is abundant in the hair-producing progenitors of the follicle.

It is found in the nucleus. Its function is as follows. Transcription factor that binds DNA in a sequence-specific manner. Participates in the Wnt signaling pathway. Activates transcription of target genes in the presence of CTNNB1 and EP300. PIASG antagonizes both Wnt-dependent and Wnt-independent activation by LEF1. TLE1, TLE2, TLE3 and TLE4 repress transactivation mediated by LEF1 and CTNNB1. Regulates T-cell receptor alpha enhancer function. Required for IL17A expressing gamma-delta T-cell maturation and development, via binding to regulator loci of BLK to modulate expression. Acts as a positive regulator of odontoblast differentiation during mesenchymal tooth germ formation, expression is repressed during the bell stage by MSX1-mediated inhibition of CTNNB1 signaling. May play a role in hair cell differentiation and follicle morphogenesis. This chain is Lymphoid enhancer-binding factor 1, found in Mus musculus (Mouse).